A 2216-amino-acid chain; its full sequence is RNA-directed RNA polymerase L (2216 aa).

The endonuclease stretch occupies residues 26-289 (KTSFLSQVNL…ETRTAMLDER (264 aa)). The Mn(2+) site is built by Glu51, Asp88, and Glu101. The active site involves Lys114. In terms of domain architecture, RdRp catalytic spans 1167–1364 (LDMKCVVRLS…YLSSKFNKFV (198 aa)). Asp1323 lines the Mg(2+) pocket.

Belongs to the Bunyavirales RNA polymerase family. In terms of assembly, homomultimer; the oligomeric structure is essential for the polymerase activity. Interacts with nucleoprotein N. Interacts with protein Z; this interaction inhibits viral transcription and replication, Z partially blocks the product exit tunnel for the releasing nascent RNA product. Mn(2+) serves as cofactor. The cofactor is Mg(2+).

The protein resides in the virion. The protein localises to the host cytoplasm. The enzyme catalyses RNA(n) + a ribonucleoside 5'-triphosphate = RNA(n+1) + diphosphate. Functionally, RNA-dependent RNA polymerase, which is responsible for the replication and transcription of the viral RNA genome using antigenomic RNA as an intermediate. During transcription, synthesizes subgenomic RNAs and assures their capping by a cap-snatching mechanism, which involves the endonuclease activity cleaving the host capped pre-mRNAs. These short capped RNAs are then used as primers for viral transcription. The 3'-end of subgenomic mRNAs molecules are heterogeneous and not polyadenylated. The replicase function is to direct synthesis of antigenomic and genomic RNA which are encapsidated and non capped. As a consequence of the use of the same enzyme for both transcription and replication, these mechanisms need to be well coordinated. These processes may be regulated by proteins N and Z in a dose-dependent manner. Z protein inhibits the viral polymerase L und thus the viral transcription and RNA synthesis. This chain is RNA-directed RNA polymerase L, found in Bear Canyon mammarenavirus (isolate Mouse/United States/AV A0070039/2000) (BCNV).